The primary structure comprises 55 residues: Large ribosomal subunit protein bL33 (55 aa).

Belongs to the bacterial ribosomal protein bL33 family.

This chain is Large ribosomal subunit protein bL33, found in Sinorhizobium medicae (strain WSM419) (Ensifer medicae).